A 272-amino-acid chain; its full sequence is Acyl-[acyl-carrier-protein]--UDP-N-acetylglucosamine O-acyltransferase (272 aa).

It belongs to the transferase hexapeptide repeat family. LpxA subfamily. Homotrimer.

It is found in the cytoplasm. The catalysed reaction is a (3R)-hydroxyacyl-[ACP] + UDP-N-acetyl-alpha-D-glucosamine = a UDP-3-O-[(3R)-3-hydroxyacyl]-N-acetyl-alpha-D-glucosamine + holo-[ACP]. It participates in glycolipid biosynthesis; lipid IV(A) biosynthesis; lipid IV(A) from (3R)-3-hydroxytetradecanoyl-[acyl-carrier-protein] and UDP-N-acetyl-alpha-D-glucosamine: step 1/6. Functionally, involved in the biosynthesis of lipid A, a phosphorylated glycolipid that anchors the lipopolysaccharide to the outer membrane of the cell. In Rhizobium etli (strain ATCC 51251 / DSM 11541 / JCM 21823 / NBRC 15573 / CFN 42), this protein is Acyl-[acyl-carrier-protein]--UDP-N-acetylglucosamine O-acyltransferase.